A 610-amino-acid polypeptide reads, in one-letter code: Putative sensor histidine kinase NtrY-like (610 aa).

The next 4 membrane-spanning stretches (helical) occupy residues 18–38, 49–69, 92–112, and 292–312; these read IGIL…TISI, KVIW…ILLT, IVVA…ISSA, and IIFI…GVIV. Residues 314-368 form the HAMP domain; that stretch reads AKIVNPIKKLVIATDKVKSGDLTVQVPENEVDKDEIGTLYAAFNRMIKQLSRQQR. Residues 385–596 enclose the Histidine kinase domain; that stretch reads KVAHEIKNPL…VIDIRFNLEE (212 aa). The residue at position 388 (His388) is a Phosphohistidine; by autocatalysis.

It is found in the cell membrane. The enzyme catalyses ATP + protein L-histidine = ADP + protein N-phospho-L-histidine.. Its function is as follows. Member of the two-component regulatory system RBE_0470/RBE_0312. The protein is Putative sensor histidine kinase NtrY-like of Rickettsia bellii (strain RML369-C).